The sequence spans 827 residues: Periplasmic nitrate reductase (827 aa).

Residues 1-32 constitute a signal peptide (tat-type signal); the sequence is MNLSRRDFMKANAALAAASVAGLIIPVKNVNA. Residues 37 to 93 form the 4Fe-4S Mo/W bis-MGD-type domain; it reads ITWDKAVCRFCGTGCAVLVGTKDGRVVASQGDPDAEVNRGLNCIKGYFLPKIMYGKD. Residues Cys44, Cys47, Cys51, and Cys79 each contribute to the [4Fe-4S] cluster site. Residues Lys81, Gln148, Asn173, Cys177, 210–217, 242–246, 261–263, Met372, Gln376, Asn482, 508–509, Lys531, Asp558, and 717–726 contribute to the Mo-bis(molybdopterin guanine dinucleotide) site; these read WGSNMAEM, STFEH, QSD, SD, and TGRILEHWHT. Phe793 provides a ligand contact to substrate. Asn801 and Lys818 together coordinate Mo-bis(molybdopterin guanine dinucleotide).

This sequence belongs to the prokaryotic molybdopterin-containing oxidoreductase family. NasA/NapA/NarB subfamily. In terms of assembly, component of the periplasmic nitrate reductase NapAB complex composed of NapA and NapB. [4Fe-4S] cluster serves as cofactor. Requires Mo-bis(molybdopterin guanine dinucleotide) as cofactor. In terms of processing, predicted to be exported by the Tat system. The position of the signal peptide cleavage has not been experimentally proven.

It is found in the periplasm. The enzyme catalyses 2 Fe(II)-[cytochrome] + nitrate + 2 H(+) = 2 Fe(III)-[cytochrome] + nitrite + H2O. In terms of biological role, catalytic subunit of the periplasmic nitrate reductase complex NapAB. Receives electrons from NapB and catalyzes the reduction of nitrate to nitrite. In Histophilus somni (strain 129Pt) (Haemophilus somnus), this protein is Periplasmic nitrate reductase.